Consider the following 406-residue polypeptide: Cysteine desulfurase (406 aa).

N6-(pyridoxal phosphate)lysine is present on Lys-226. The active-site Cysteine persulfide intermediate is the Cys-364.

This sequence belongs to the class-V pyridoxal-phosphate-dependent aminotransferase family. Csd subfamily. In terms of assembly, homodimer. Interacts with SufE and the SufBCD complex composed of SufB, SufC and SufD. The interaction with SufE is required to mediate the direct transfer of the sulfur atom from the S-sulfanylcysteine. Requires pyridoxal 5'-phosphate as cofactor.

Its subcellular location is the cytoplasm. It carries out the reaction (sulfur carrier)-H + L-cysteine = (sulfur carrier)-SH + L-alanine. It catalyses the reaction L-selenocysteine + AH2 = hydrogenselenide + L-alanine + A + H(+). Its pathway is cofactor biosynthesis; iron-sulfur cluster biosynthesis. Cysteine desulfurases mobilize the sulfur from L-cysteine to yield L-alanine, an essential step in sulfur metabolism for biosynthesis of a variety of sulfur-containing biomolecules. Component of the suf operon, which is activated and required under specific conditions such as oxidative stress and iron limitation. Acts as a potent selenocysteine lyase in vitro, that mobilizes selenium from L-selenocysteine. Selenocysteine lyase activity is however unsure in vivo. This is Cysteine desulfurase from Enterobacter sp. (strain 638).